The sequence spans 98 residues: MKGQNVTLQDIAIELEDTISPINLHCEEEIETEEVDTPNPFAITATCYACEQVLRLAVVTSTEGIHQLQQLLFDNLFLLCAACSKQVFCNRRPERNGP.

The interval 1–37 is E7 terminal domain; the sequence is MKGQNVTLQDIAIELEDTISPINLHCEEEIETEEVDT. Positions 24 to 28 match the LXCXE motif; interaction with host RB1 and TMEM173/STING motif; it reads LHCEE. A zinc finger lies at 47–83; sequence CYACEQVLRLAVVTSTEGIHQLQQLLFDNLFLLCAAC. Residues 65–73 carry the Nuclear export signal motif; the sequence is IHQLQQLLF.

The protein belongs to the papillomaviridae E7 protein family. Homodimer. Homooligomer. Interacts with host RB1; this interaction induces dissociation of RB1-E2F1 complex thereby disrupting RB1 activity. Interacts with host EP300; this interaction represses EP300 transcriptional activity. Interacts with protein E2; this interaction inhibits E7 oncogenic activity. Interacts with host TMEM173/STING; this interaction impairs the ability of TMEM173/STING to sense cytosolic DNA and promote the production of type I interferon (IFN-alpha and IFN-beta). In terms of processing, highly phosphorylated.

It localises to the host cytoplasm. The protein localises to the host nucleus. Functionally, plays a role in viral genome replication by driving entry of quiescent cells into the cell cycle. Stimulation of progression from G1 to S phase allows the virus to efficiently use the cellular DNA replicating machinery to achieve viral genome replication. E7 protein has both transforming and trans-activating activities. Induces the disassembly of the E2F1 transcription factor from RB1, with subsequent transcriptional activation of E2F1-regulated S-phase genes. Interferes with host histone deacetylation mediated by HDAC1 and HDAC2, leading to transcription activation. Also plays a role in the inhibition of both antiviral and antiproliferative functions of host interferon alpha. Interaction with host TMEM173/STING impairs the ability of TMEM173/STING to sense cytosolic DNA and promote the production of type I interferon (IFN-alpha and IFN-beta). The protein is Protein E7 of Bos taurus papillomavirus 4 (Bovine papillomavirus 4).